Reading from the N-terminus, the 251-residue chain is UPF0246 protein PEPE_1842 (251 aa).

This sequence belongs to the UPF0246 family.

This is UPF0246 protein PEPE_1842 from Pediococcus pentosaceus (strain ATCC 25745 / CCUG 21536 / LMG 10740 / 183-1w).